A 705-amino-acid polypeptide reads, in one-letter code: Dolichyl-diphosphooligosaccharide--protein glycosyltransferase subunit STT3A (705 aa).

The Cytoplasmic segment spans residues 1 to 17; that stretch reads MTKFGFLRLSYEKQDTL. The helical transmembrane segment at 18 to 38 threads the bilayer; the sequence is LKLLILSMAAVLSFSTRLFAV. Over 39 to 119 the chain is Lumenal; that stretch reads LRFESVIHEF…IDIRNVCVFL (81 aa). The DXD motif 1 signature appears at 47–49; it reads EFD. Asp49 contributes to the Mn(2+) binding site. A helical membrane pass occupies residues 120–138; it reads APLFSSFTTIVTYHLTKEL. Residues 139 to 140 are Cytoplasmic-facing; sequence KD. A helical transmembrane segment spans residues 141–158; it reads AGAGLLAAAMIAVVPGYI. Residues 159 to 169 lie on the Lumenal side of the membrane; it reads SRSVAGSYDNE. Mn(2+) contacts are provided by Asp167 and Glu169. The DXD motif 2 signature appears at 167–169; sequence DNE. The helical transmembrane segment at 170 to 189 threads the bilayer; sequence GIAIFCMLLTYYMWIKAVKT. Topologically, residues 190-191 are cytoplasmic; the sequence is GS. A helical membrane pass occupies residues 192–206; the sequence is ICWAAKCALAYFYMV. Over 207 to 211 the chain is Lumenal; sequence SSWGG. Residues 212–228 form a helical membrane-spanning segment; it reads YVFLINLIPLHVLVLML. Residues 229–233 lie on the Cytoplasmic side of the membrane; it reads TGRFS. The chain crosses the membrane as a helical span at residues 234–259; sequence HRIYVAYCTVYCLGTILSMQISFVGF. Residues 260 to 267 are Lumenal-facing; sequence QPVLSSEH. The chain crosses the membrane as a helical span at residues 268 to 287; the sequence is MAAFGVFGLCQIHAFVDYLR. The Cytoplasmic segment spans residues 288 to 300; it reads SKLNPQQFEVLFR. Residues 301–321 form a helical membrane-spanning segment; the sequence is SVISLVGFVLLTVGALLMLTG. Over 322–356 the chain is Lumenal; sequence KISPWTGRFYSLLDPSYAKNNIPIIASVSEHQPTT. Residues 348–351 carry the SVSE motif motif; that stretch reads SVSE. A helical transmembrane segment spans residues 357–379; the sequence is WSSYYFDLQLLVFMFPVGLYYCF. The Cytoplasmic portion of the chain corresponds to 380–385; sequence SNLSDA. A helical transmembrane segment spans residues 386-402; it reads RIFIIMYGVTSMYFSAV. At 403-406 the chain is on the lumenal side; sequence MVRL. A dolichyl diphosphooligosaccharide-binding site is contributed by Arg405. The chain crosses the membrane as a helical span at residues 407-428; sequence MLVLAPVMCILSGIGVSQVLST. Residues 429-453 lie on the Cytoplasmic side of the membrane; that stretch reads YMKNLDISRPDKKSKKQQDSTYPIK. Residues 454–473 traverse the membrane as a helical segment; that stretch reads NEVASGMILVMAFFLITYTF. At 474–705 the chain is on the lumenal side; the sequence is HSTWVTSEAY…DLDNRGLSRT (232 aa). Residues 525 to 527 are interacts with target acceptor peptide in protein substrate; the sequence is WWD. The WWDYG motif motif lies at 525-529; that stretch reads WWDYG. Tyr530 is a dolichyl diphosphooligosaccharide binding site. Asn537 and Asn544 each carry an N-linked (GlcNAc...) asparagine glycan. N-linked (GlcNAc...) (high mannose) asparagine glycosylation is present at Asn548. A DK motif motif is present at residues 592 to 599; it reads DINKFLWM.

Belongs to the STT3 family. In terms of assembly, component of the oligosaccharyltransferase (OST) complex. There are 2 OST complexes, OST-A and OST-B, which contain STT3A or STT3B as catalytic subunit, respectively. OST-A and OST-B contain common core subunits RPN1, RPN2, OST48, OST4, DAD1 and TMEM258, and OST-A contains DC2/OSTC and KRTCAP2/KCP2 specific accessory subunits. OST-A complex assembly occurs through the formation of 3 subcomplexes. Subcomplex 1 contains RPN1 and TMEM258, subcomplex 2 contains the OST-A-specific subunits STT3A, DC2/OSTC, and KCP2 as well as the core subunit OST4, and subcomplex 3 contains RPN2, DAD1, and OST48. The OST-A complex can form stable complexes with the Sec61 complex or with both the Sec61 and TRAP complexes. Mg(2+) is required as a cofactor. Mn(2+) serves as cofactor. As to expression, expressed at high levels in placenta, liver, muscle and pancreas, and at very low levels in brain, lung and kidney. Expressed in skin fibroblasts (at protein level).

It localises to the endoplasmic reticulum. The protein resides in the endoplasmic reticulum membrane. It carries out the reaction a di-trans,poly-cis-dolichyl diphosphooligosaccharide + L-asparaginyl-[protein] = N(4)-(oligosaccharide-(1-&gt;4)-N-acetyl-beta-D-glucosaminyl-(1-&gt;4)-N-acetyl-beta-D-glucosaminyl)-L-asparaginyl-[protein] + a di-trans,poly-cis-dolichyl diphosphate + H(+). It participates in protein modification; protein glycosylation. STT3A, but not STT3B, is specifically inhibited by the N-glycosylation inhibitor NGI-235, which prevents productive binding pose of the glycan donor in the active site of STT3A. In terms of biological role, catalytic subunit of the oligosaccharyl transferase (OST) complex that catalyzes the initial transfer of a defined glycan (Glc(3)Man(9)GlcNAc(2) in eukaryotes) from the lipid carrier dolichol-pyrophosphate to an asparagine residue within an Asn-X-Ser/Thr consensus motif in nascent polypeptide chains, the first step in protein N-glycosylation. N-glycosylation occurs cotranslationally and the complex associates with the Sec61 complex at the channel-forming translocon complex that mediates protein translocation across the endoplasmic reticulum (ER). All subunits are required for a maximal enzyme activity. This subunit contains the active site and the acceptor peptide and donor lipid-linked oligosaccharide (LLO) binding pockets. STT3A is present in the majority of OST complexes and mediates cotranslational N-glycosylation of most sites on target proteins, while STT3B-containing complexes are required for efficient post-translational glycosylation and mediate glycosylation of sites that have been skipped by STT3A. STT3A-containing OST-A complex is also required to prevent hyperglycosylation of some target proteins by preventing glycosylation of facultative sites before folding of target proteins is completed. This Homo sapiens (Human) protein is Dolichyl-diphosphooligosaccharide--protein glycosyltransferase subunit STT3A.